The chain runs to 394 residues: Elongation factor Tu (394 aa).

The region spanning 10-204 (KPHINIGTIG…AVDDNIPTPE (195 aa)) is the tr-type G domain. A G1 region spans residues 19–26 (GHVDHGKT). 19–26 (GHVDHGKT) is a GTP binding site. Threonine 26 contacts Mg(2+). The G2 stretch occupies residues 60 to 64 (GITIN). The tract at residues 81–84 (DCPG) is G3. GTP contacts are provided by residues 81 to 85 (DCPGH) and 136 to 139 (NKID). A G4 region spans residues 136–139 (NKID). Residues 174-176 (SAL) are G5.

This sequence belongs to the TRAFAC class translation factor GTPase superfamily. Classic translation factor GTPase family. EF-Tu/EF-1A subfamily. As to quaternary structure, monomer.

The protein resides in the cytoplasm. The catalysed reaction is GTP + H2O = GDP + phosphate + H(+). GTP hydrolase that promotes the GTP-dependent binding of aminoacyl-tRNA to the A-site of ribosomes during protein biosynthesis. The polypeptide is Elongation factor Tu (Chlamydia felis (strain Fe/C-56) (Chlamydophila felis)).